The following is a 708-amino-acid chain: ARF GTPase-activating protein GIT2 (708 aa).

One can recognise an Arf-GAP domain in the interval 1-124 (MSKRLRSSDV…AFVHRLPCRE (124 aa)). Residues 11–34 (CADCNGPDPSWASVNRGTFICDEC) form a C4-type zinc finger. ANK repeat units lie at residues 132 to 161 (DLSK…QANF), 166 to 195 (KGST…DPGT), and 199 to 228 (SGKT…ELTD). The interval 376-592 (STQHSTESQD…SPTLPSTEDV (217 aa)) is disordered. Over residues 384–401 (QDNDQPDYDSVASDEDTD) the composition is skewed to acidic residues. Phosphoserine is present on residues serine 393 and serine 396. Position 400 is a phosphothreonine (threonine 400). Residues 407 to 438 (SKANRQKLQTLQSENSSLRRQATASACQVQTG) show a composition bias toward polar residues. The span at 504-518 (TSSSSLPSFPSTLSW) shows a compositional bias: low complexity. A phosphoserine mark is found at serine 508, serine 511, and serine 519. The span at 519–532 (SRDESARRASRLEK) shows a compositional bias: basic and acidic residues. Threonine 536 carries the post-translational modification Phosphothreonine. At serine 563 the chain carries Phosphoserine.

As to quaternary structure, may form heterooligomers with GIT1. Directly interacts with protein Piccolo/PCLO. Interacts with PPFIA1 and PPFIA2. Interacts with ARHGEF7. Identified in a complex with ARHGEF6 and BIN2. Interacts with PAK3. Interacts with PXN/paxillin. Interacts with TGFB1I1. Forms a complex with EFNB1 and GRB4/NCK2. Post-translationally, tyrosine phosphorylated when coexpressed in cells with PTK2/FAK1 and SRC. In terms of tissue distribution, expressed in the brain (at protein level).

In terms of biological role, GTPase-activating protein for ADP ribosylation factor family members, including ARF1. The polypeptide is ARF GTPase-activating protein GIT2 (Git2) (Mus musculus (Mouse)).